The sequence spans 491 residues: Protein nucleotidyltransferase YdiU (491 aa).

Positions 92, 94, 95, 115, 127, 128, 178, and 185 each coordinate ATP. Aspartate 254 functions as the Proton acceptor in the catalytic mechanism. Residues asparagine 255 and aspartate 264 each coordinate Mg(2+). Aspartate 264 provides a ligand contact to ATP.

The protein belongs to the SELO family. Mg(2+) serves as cofactor. Requires Mn(2+) as cofactor.

The catalysed reaction is L-seryl-[protein] + ATP = 3-O-(5'-adenylyl)-L-seryl-[protein] + diphosphate. The enzyme catalyses L-threonyl-[protein] + ATP = 3-O-(5'-adenylyl)-L-threonyl-[protein] + diphosphate. It catalyses the reaction L-tyrosyl-[protein] + ATP = O-(5'-adenylyl)-L-tyrosyl-[protein] + diphosphate. It carries out the reaction L-histidyl-[protein] + UTP = N(tele)-(5'-uridylyl)-L-histidyl-[protein] + diphosphate. The catalysed reaction is L-seryl-[protein] + UTP = O-(5'-uridylyl)-L-seryl-[protein] + diphosphate. The enzyme catalyses L-tyrosyl-[protein] + UTP = O-(5'-uridylyl)-L-tyrosyl-[protein] + diphosphate. Functionally, nucleotidyltransferase involved in the post-translational modification of proteins. It can catalyze the addition of adenosine monophosphate (AMP) or uridine monophosphate (UMP) to a protein, resulting in modifications known as AMPylation and UMPylation. In Pseudarthrobacter chlorophenolicus (strain ATCC 700700 / DSM 12829 / CIP 107037 / JCM 12360 / KCTC 9906 / NCIMB 13794 / A6) (Arthrobacter chlorophenolicus), this protein is Protein nucleotidyltransferase YdiU.